The primary structure comprises 332 residues: Nucleoid-associated protein VIBHAR_03026 (332 aa).

It belongs to the YejK family.

It is found in the cytoplasm. The protein localises to the nucleoid. This Vibrio campbellii (strain ATCC BAA-1116) protein is Nucleoid-associated protein VIBHAR_03026.